The chain runs to 387 residues: Alpha-sarcoglycan (387 aa).

The first 23 residues, 1-23 (MAETLFWTPLLVVLLAGLGDTEA), serve as a signal peptide directing secretion. Topologically, residues 24–290 (QQTTLHPLVG…APDRDFLVDA (267 aa)) are extracellular. N174 and N246 each carry an N-linked (GlcNAc...) asparagine glycan. Residues 291–311 (LVTLLVPLLVALLLTLLLAYV) traverse the membrane as a helical segment. At 312 to 387 (MCCRREGRLK…AQVPLILDQH (76 aa)) the chain is on the cytoplasmic side. Position 377 is a phosphoserine (S377).

Belongs to the sarcoglycan alpha/epsilon family. Interacts with the syntrophin SNTA1. Cross-link to form 2 major subcomplexes: one consisting of SGCB, SGCD and SGCG and the other consisting of SGCB and SGCD. The association between SGCB and SGCG is particularly strong while SGCA is loosely associated with the other sarcoglycans. Most strongly expressed in skeletal muscle. Also expressed in cardiac muscle and, at much lower levels, in lung. In the fetus, most abundant in cardiac muscle and, at lower levels, in lung. Also detected in liver and kidney. Not expressed in brain.

It is found in the cell membrane. The protein localises to the sarcolemma. The protein resides in the cytoplasm. Its subcellular location is the cytoskeleton. Component of the sarcoglycan complex, a subcomplex of the dystrophin-glycoprotein complex which forms a link between the F-actin cytoskeleton and the extracellular matrix. This Homo sapiens (Human) protein is Alpha-sarcoglycan (SGCA).